Reading from the N-terminus, the 448-residue chain is UDP-N-acetylmuramoylalanine--D-glutamate ligase (448 aa).

116 to 122 (GSNAKST) lines the ATP pocket.

This sequence belongs to the MurCDEF family.

It localises to the cytoplasm. It carries out the reaction UDP-N-acetyl-alpha-D-muramoyl-L-alanine + D-glutamate + ATP = UDP-N-acetyl-alpha-D-muramoyl-L-alanyl-D-glutamate + ADP + phosphate + H(+). Its pathway is cell wall biogenesis; peptidoglycan biosynthesis. In terms of biological role, cell wall formation. Catalyzes the addition of glutamate to the nucleotide precursor UDP-N-acetylmuramoyl-L-alanine (UMA). The sequence is that of UDP-N-acetylmuramoylalanine--D-glutamate ligase from Pseudomonas fluorescens (strain Pf0-1).